The sequence spans 506 residues: Kynurenine 3-monooxygenase (506 aa).

The disordered stretch occupies residues 153–174 (QETSLLPGEESEKDKKQNTEDE). Basic and acidic residues predominate over residues 162–171 (ESEKDKKQNT).

The protein belongs to the aromatic-ring hydroxylase family. KMO subfamily. FAD is required as a cofactor.

The protein resides in the mitochondrion outer membrane. It catalyses the reaction L-kynurenine + NADPH + O2 + H(+) = 3-hydroxy-L-kynurenine + NADP(+) + H2O. It functions in the pathway cofactor biosynthesis; NAD(+) biosynthesis; quinolinate from L-kynurenine: step 1/3. In terms of biological role, catalyzes the hydroxylation of L-kynurenine (L-Kyn) to form 3-hydroxy-L-kynurenine (L-3OHKyn). Required for synthesis of quinolinic acid. The sequence is that of Kynurenine 3-monooxygenase from Cryptococcus neoformans var. neoformans serotype D (strain JEC21 / ATCC MYA-565) (Filobasidiella neoformans).